The sequence spans 382 residues: Lipid-A-disaccharide synthase (382 aa).

Belongs to the LpxB family.

The enzyme catalyses a lipid X + a UDP-2-N,3-O-bis[(3R)-3-hydroxyacyl]-alpha-D-glucosamine = a lipid A disaccharide + UDP + H(+). It functions in the pathway bacterial outer membrane biogenesis; LPS lipid A biosynthesis. In terms of biological role, condensation of UDP-2,3-diacylglucosamine and 2,3-diacylglucosamine-1-phosphate to form lipid A disaccharide, a precursor of lipid A, a phosphorylated glycolipid that anchors the lipopolysaccharide to the outer membrane of the cell. The protein is Lipid-A-disaccharide synthase of Dechloromonas aromatica (strain RCB).